The chain runs to 480 residues: RuvB-like helicase 2 (480 aa).

ATP is bound at residue 73–80 (GEPSTGKT).

This sequence belongs to the RuvB family. In terms of assembly, forms homohexameric rings. May form a dodecamer with rept made of two stacked hexameric rings. Component of the chromatin remodeling Ino80 complex.

Its subcellular location is the nucleus. The enzyme catalyses ATP + H2O = ADP + phosphate + H(+). Functionally, acts as a transcriptional coactivator in Wg signaling caused by altered arm signaling. Pont and rept interfere antagonistically with nuclear arm signaling function, and are required to enhance or reduce arm activity, respectively. Also an essential cofactor for the normal function of Myc; required for cellular proliferation and growth. In terms of biological role, proposed core component of the chromatin remodeling Ino80 complex which is involved in transcriptional regulation, DNA replication and probably DNA repair. This is RuvB-like helicase 2 from Drosophila pseudoobscura pseudoobscura (Fruit fly).